The chain runs to 23 residues: Paralytic peptide 2 (23 aa).

C7 and C19 are joined by a disulfide.

The protein belongs to the GBP/PSP1/paralytic peptide family. Hemolymph.

Causes rapid, rigid paralysis when injected into Lepidopteran larvae. The physiological role may be to reduce hemolymph loss following injury and promote wound healing. The protein is Paralytic peptide 2 of Manduca sexta (Tobacco hawkmoth).